Here is a 141-residue protein sequence, read N- to C-terminus: Hemoglobin subunit beta-C (141 aa).

Positions 1–141 constitute a Globin domain; sequence PNKALITGFW…VASALAHRYH (141 aa). Heme b contacts are provided by H58 and H87.

The protein belongs to the globin family. As to quaternary structure, heterotetramer of two alpha chains and two beta chains. As to expression, red blood cells.

Functionally, involved in oxygen transport from the lung to the various peripheral tissues. The sequence is that of Hemoglobin subunit beta-C (HBBC) from Ovis aries musimon (Mouflon).